Consider the following 490-residue polypeptide: Betaine aldehyde dehydrogenase (490 aa).

I27 and D93 together coordinate K(+). 150-152 (GAW) is a binding site for NAD(+). K162 functions as the Charge relay system in the catalytic mechanism. 176–179 (KPSE) is a binding site for NAD(+). Position 180 (V180) interacts with K(+). NAD(+) is bound at residue 230–233 (GTDT). Position 246 (L246) interacts with K(+). E252 acts as the Proton acceptor in catalysis. Residues G254, C286, and E387 each contribute to the NAD(+) site. C286 (nucleophile) is an active-site residue. C286 is subject to Cysteine sulfenic acid (-SOH). The K(+) site is built by K457 and G460. The active-site Charge relay system is E464.

Belongs to the aldehyde dehydrogenase family. As to quaternary structure, dimer of dimers. K(+) serves as cofactor.

The catalysed reaction is betaine aldehyde + NAD(+) + H2O = glycine betaine + NADH + 2 H(+). The protein operates within amine and polyamine biosynthesis; betaine biosynthesis via choline pathway; betaine from betaine aldehyde: step 1/1. Involved in the biosynthesis of the osmoprotectant glycine betaine. Catalyzes the irreversible oxidation of betaine aldehyde to the corresponding acid. The protein is Betaine aldehyde dehydrogenase of Pseudomonas savastanoi pv. phaseolicola (strain 1448A / Race 6) (Pseudomonas syringae pv. phaseolicola (strain 1448A / Race 6)).